The sequence spans 132 residues: D-ribose pyranase (132 aa).

H20 (proton donor) is an active-site residue. Substrate contacts are provided by residues D28, H99, and 121-123 (YSN).

It belongs to the RbsD / FucU family. RbsD subfamily. As to quaternary structure, homodecamer.

It localises to the cytoplasm. The enzyme catalyses beta-D-ribopyranose = beta-D-ribofuranose. The protein operates within carbohydrate metabolism; D-ribose degradation; D-ribose 5-phosphate from beta-D-ribopyranose: step 1/2. Functionally, catalyzes the interconversion of beta-pyran and beta-furan forms of D-ribose. In Lactococcus lactis subsp. lactis (strain IL1403) (Streptococcus lactis), this protein is D-ribose pyranase.